The chain runs to 339 residues: D-alanine--D-alanine ligase (339 aa).

Residues 126 to 333 (KQVLASVGMP…YSELVTRLVE (208 aa)) enclose the ATP-grasp domain. 158–213 (AGELGYPLFVKPANLGSSVGISKVSGPGELERALDLAFSLGRRVILEAMTAHKPRE) is a binding site for ATP. Asp286, Glu300, and Asn302 together coordinate Mg(2+).

Belongs to the D-alanine--D-alanine ligase family. The cofactor is Mg(2+). Mn(2+) is required as a cofactor.

Its subcellular location is the cytoplasm. The enzyme catalyses 2 D-alanine + ATP = D-alanyl-D-alanine + ADP + phosphate + H(+). It functions in the pathway cell wall biogenesis; peptidoglycan biosynthesis. Cell wall formation. This chain is D-alanine--D-alanine ligase, found in Deinococcus geothermalis (strain DSM 11300 / CIP 105573 / AG-3a).